The chain runs to 310 residues: p-hydroxybenzoic acid efflux pump subunit AaeA (310 aa).

A helical membrane pass occupies residues 12-32; it reads AITLVLVILAFIAIFRAWVYY.

It belongs to the membrane fusion protein (MFP) (TC 8.A.1) family.

It localises to the cell inner membrane. Its function is as follows. Forms an efflux pump with AaeB. The polypeptide is p-hydroxybenzoic acid efflux pump subunit AaeA (Salmonella heidelberg (strain SL476)).